We begin with the raw amino-acid sequence, 545 residues long: Alpha-galactosidase A (545 aa).

The N-terminal stretch at 1-31 (MIQGLESIMNQGTKRILLAATLAATPWQVYG) is a signal peptide. The cysteines at positions 54 and 86 are disulfide-linked. 4 N-linked (GlcNAc...) asparagine glycosylation sites follow: N57, N95, N101, and N131. A disulfide bond links C134 and C164. D162 serves as the catalytic Nucleophile. An N-linked (GlcNAc...) asparagine glycan is attached at N211. The active-site Proton donor is D220. N-linked (GlcNAc...) asparagine glycosylation is found at N363 and N444. In terms of domain architecture, Ricin B-type lectin spans 421–518 (CSSVVPTGLV…KNAKTDGCLT (98 aa)). Disulfide bonds link C438–C452 and C477–C490.

It belongs to the glycosyl hydrolase 27 family. A C-terminal Ser/Thr-rich region may provide possible sites for O-glycosylation.

It localises to the secreted. It catalyses the reaction Hydrolysis of terminal, non-reducing alpha-D-galactose residues in alpha-D-galactosides, including galactose oligosaccharides, galactomannans and galactolipids.. In terms of biological role, hydrolyzes a variety of simple alpha-D-galactoside as well as more complex molecules such as oligosaccharides and polysaccharides. This chain is Alpha-galactosidase A (aglA), found in Aspergillus niger.